Here is a 184-residue protein sequence, read N- to C-terminus: Protein DP71L (184 aa).

Residues 1–15 are compositionally biased toward basic residues; sequence MSRRNKRSRRRRKKP. Residues 1-41 are disordered; it reads MSRRNKRSRRRRKKPLNTIQPGPSKPSAQDEPIKSVSHHSS. 2 important for host CHOP inhibition regions span residues 125–127 and 169–173; these read VYF and LSAVL.

It belongs to the asfivirus DP71L family. As to quaternary structure, interacts (via C-terminus) with host PPP1CB.

Functionally, interacts with the host phosphatase PP1 catalytic subunit (PPP1CB) and recruits it to dephosphorylate EIF2S1/eIF2alpha and therefore restores the host translation that has been shut-down by the host. Also inhibits the EIF2S1/eIF2alpha-ATF4-DDIT3/CHOP pathway. This chain is Protein DP71L, found in Ornithodoros (relapsing fever ticks).